Reading from the N-terminus, the 184-residue chain is Adenine phosphoribosyltransferase (184 aa).

The protein belongs to the purine/pyrimidine phosphoribosyltransferase family. As to quaternary structure, homodimer.

Its subcellular location is the cytoplasm. The enzyme catalyses AMP + diphosphate = 5-phospho-alpha-D-ribose 1-diphosphate + adenine. It participates in purine metabolism; AMP biosynthesis via salvage pathway; AMP from adenine: step 1/1. Catalyzes a salvage reaction resulting in the formation of AMP, that is energically less costly than de novo synthesis. In Sphingopyxis alaskensis (strain DSM 13593 / LMG 18877 / RB2256) (Sphingomonas alaskensis), this protein is Adenine phosphoribosyltransferase.